Reading from the N-terminus, the 307-residue chain is Protoheme IX farnesyltransferase (307 aa).

The next 9 helical transmembrane spans lie at valine 31–histidine 51, proline 52–isoleucine 72, alanine 102–leucine 119, leucine 123–lysine 145, asparagine 151–serine 171, valine 179–phenylalanine 199, isoleucine 225–serine 245, phenylalanine 247–leucine 267, and phenylalanine 281–isoleucine 301.

The protein belongs to the UbiA prenyltransferase family. Protoheme IX farnesyltransferase subfamily.

It is found in the cell inner membrane. It catalyses the reaction heme b + (2E,6E)-farnesyl diphosphate + H2O = Fe(II)-heme o + diphosphate. The protein operates within porphyrin-containing compound metabolism; heme O biosynthesis; heme O from protoheme: step 1/1. Functionally, converts heme B (protoheme IX) to heme O by substitution of the vinyl group on carbon 2 of heme B porphyrin ring with a hydroxyethyl farnesyl side group. The protein is Protoheme IX farnesyltransferase of Rickettsia canadensis (strain McKiel).